Reading from the N-terminus, the 144-residue chain is Large ribosomal subunit protein uL11 (144 aa).

It belongs to the universal ribosomal protein uL11 family. Part of the ribosomal stalk of the 50S ribosomal subunit. Interacts with L10 and the large rRNA to form the base of the stalk. L10 forms an elongated spine to which L12 dimers bind in a sequential fashion forming a multimeric L10(L12)X complex. In terms of processing, one or more lysine residues are methylated.

Forms part of the ribosomal stalk which helps the ribosome interact with GTP-bound translation factors. In Corynebacterium glutamicum (strain R), this protein is Large ribosomal subunit protein uL11.